The chain runs to 406 residues: Corticosteroid-binding globulin (406 aa).

Positions 1 to 22 (MLLTLYACLLWLSTSGLWTSQA) are cleaved as a signal peptide. N-linked (GlcNAc...) asparagine glycosylation is found at asparagine 95, asparagine 119, and asparagine 223. Glutamine 253 contacts cortisol. Asparagine 259 carries an N-linked (GlcNAc...) asparagine glycan. Cortisol contacts are provided by glutamine 285 and tryptophan 394.

Belongs to the serpin family.

Its subcellular location is the secreted. In terms of biological role, major transport protein for glucocorticoids and progestins in the blood of almost all vertebrate species. The protein is Corticosteroid-binding globulin (Serpina6) of Sus scrofa (Pig).